We begin with the raw amino-acid sequence, 30 residues long: Cyclotide mech-1 (30 aa).

Positions 1 to 30 (GVIPCGESCVFIPCINKKKCSCKNKVCYRD) form a cross-link, cyclopeptide (Gly-Asp). Cystine bridges form between Cys5/Cys20, Cys9/Cys22, and Cys14/Cys27.

In terms of processing, this is a cyclic peptide. Contains 3 disulfide bonds.

In terms of biological role, probably participates in a plant defense mechanism (Potential). Binds to and induces leakage in phospholipd membranes, particularly ones containing 1-palmitoyl-2-oleophosphatidylethanolamine (POPE). Not active against Gram-negative bacterium E.coli ATCC 25922 or Gram-positive bacterium S.aureus ATCC 25923 up to a concentration of 64 uM. In Melicytus chathamicus (Chatham Island mahoe), this protein is Cyclotide mech-1.